We begin with the raw amino-acid sequence, 887 residues long: Alanine--tRNA ligase (887 aa).

4 residues coordinate Zn(2+): H564, H568, C676, and H680.

It belongs to the class-II aminoacyl-tRNA synthetase family. It depends on Zn(2+) as a cofactor.

It localises to the cytoplasm. It carries out the reaction tRNA(Ala) + L-alanine + ATP = L-alanyl-tRNA(Ala) + AMP + diphosphate. Catalyzes the attachment of alanine to tRNA(Ala) in a two-step reaction: alanine is first activated by ATP to form Ala-AMP and then transferred to the acceptor end of tRNA(Ala). Also edits incorrectly charged Ser-tRNA(Ala) and Gly-tRNA(Ala) via its editing domain. The protein is Alanine--tRNA ligase of Chelativorans sp. (strain BNC1).